Here is a 225-residue protein sequence, read N- to C-terminus: Thaumatin-like protein (225 aa).

A signal peptide spans 1–24 (MSTFKSLSLSALLFIAFLFTCARG). Disulfide bonds link C33–C224, C74–C84, C89–C95, C140–C213, C146–C196, C154–C164, C168–C177, and C178–C183. Residue N187 is glycosylated (N-linked (GlcNAc...) asparagine).

Belongs to the thaumatin family. N-glycosylated. As to expression, woody stem plug.

The protein resides in the secreted. Has antifungal activity. The sequence is that of Thaumatin-like protein (tlp) from Actinidia deliciosa (Kiwi).